The chain runs to 310 residues: Probable mitochondrial import receptor subunit TOM40-2 (310 aa).

Position 1 is an N-acetylmethionine (M1).

Belongs to the Tom40 family. As to quaternary structure, forms part of the preprotein translocase complex of the outer mitochondrial membrane (TOM complex) which consists of at least 6 different proteins (TOM5, TOM6, TOM7, TOM20, TOM22/TOM9 and TOM40). Present in a large lipid-enriched complex called mitochondrial transmembrane lipoprotein (MTL) complex made of proteins located in the two mitochondrial membranes, including the TOM complex and the core components of the MICOS complex and containing at least digalactosyldiacylglycerol (DGDG). Binds to MIC60. Component of a mitochondrial large protein complex that contains, at least, MIC60, DGS1, TOM40, TOM20 proteins, and petC/RISP. In terms of tissue distribution, expressed in roots, flowers, young cotyledons and leaves.

The protein resides in the mitochondrion outer membrane. Its function is as follows. Central component of the receptor complex responsible for the recognition and translocation of cytosolically synthesized mitochondrial preproteins. Together with TOM22 functions as the transit peptide receptor at the surface of the mitochondrion outer membrane and facilitates the movement of preproteins into the translocation pore. Directly involved in the pore formation. The chain is Probable mitochondrial import receptor subunit TOM40-2 from Arabidopsis thaliana (Mouse-ear cress).